Reading from the N-terminus, the 392-residue chain is Chalcone synthase (392 aa).

The active site involves C165.

The protein belongs to the thiolase-like superfamily. Chalcone/stilbene synthases family.

The catalysed reaction is (E)-4-coumaroyl-CoA + 3 malonyl-CoA + 3 H(+) = 2',4,4',6'-tetrahydroxychalcone + 3 CO2 + 4 CoA. It functions in the pathway secondary metabolite biosynthesis; flavonoid biosynthesis. Its function is as follows. The primary product of this enzyme is 4,2',4',6'-tetrahydroxychalcone (also termed naringenin-chalcone or chalcone) which can under specific conditions spontaneously isomerize into naringenin. The chain is Chalcone synthase (CHS) from Persea americana (Avocado).